The following is a 131-amino-acid chain: Holo-[acyl-carrier-protein] synthase (131 aa).

Mg(2+) contacts are provided by aspartate 8 and glutamate 59.

This sequence belongs to the P-Pant transferase superfamily. AcpS family. It depends on Mg(2+) as a cofactor.

The protein localises to the cytoplasm. The catalysed reaction is apo-[ACP] + CoA = holo-[ACP] + adenosine 3',5'-bisphosphate + H(+). Transfers the 4'-phosphopantetheine moiety from coenzyme A to a Ser of acyl-carrier-protein. The chain is Holo-[acyl-carrier-protein] synthase from Rickettsia rickettsii (strain Sheila Smith).